A 301-amino-acid polypeptide reads, in one-letter code: Probable alpha-L-glutamate ligase 1 (301 aa).

The ATP-grasp domain occupies 104-287; that stretch reads MQLMSRRGIG…VAGAIIDFVE (184 aa). ATP contacts are provided by residues Lys141, 178-179, Asp187, and 211-213; these read EY and RSN. Mg(2+) contacts are provided by Asp248, Glu260, and Asn262. Mn(2+) is bound by residues Asp248, Glu260, and Asn262.

This sequence belongs to the RimK family. It depends on Mg(2+) as a cofactor. Mn(2+) is required as a cofactor.

This chain is Probable alpha-L-glutamate ligase 1, found in Shewanella baltica (strain OS185).